The sequence spans 367 residues: MTSPKQSDLLILGLETSCDETAASVVRRAADGTVTVLSSVIGTQFEKHAPFGGVVPEIAARAHVESIDAIAAEAVRAAGVGFGDLDGVAATAGPGLVGGVMVGLAFGKAVALARGAPLVAVNHLEGHAVSARLGADIAYPFLLLLVSGGHCQLLEVSGVGACKRLGTTIDDAAGEAFDKIAKSLGLPYPGGPALEKLAVGGDPTRYALPRALLGRKDCDFSFSGLKTAAARIAETLTTDDARRDLAAGVQAAIARQLSERVDRAMKLYKDSHDPEDLRFVVAGGVAANGAVRAALLADCEKNGFSFAAPPLAYCTDNAAMIALAGAERLALGIFDDLDAIARPRWPLDEAAALANPANAYGRKGAKA.

Fe cation-binding residues include His-123 and His-127. Residues 145 to 149 (LVSGG), Asp-178, Gly-191, and Asn-288 each bind substrate. Asp-316 serves as a coordination point for Fe cation.

Belongs to the KAE1 / TsaD family. Fe(2+) serves as cofactor.

The protein localises to the cytoplasm. The catalysed reaction is L-threonylcarbamoyladenylate + adenosine(37) in tRNA = N(6)-L-threonylcarbamoyladenosine(37) in tRNA + AMP + H(+). Its function is as follows. Required for the formation of a threonylcarbamoyl group on adenosine at position 37 (t(6)A37) in tRNAs that read codons beginning with adenine. Is involved in the transfer of the threonylcarbamoyl moiety of threonylcarbamoyl-AMP (TC-AMP) to the N6 group of A37, together with TsaE and TsaB. TsaD likely plays a direct catalytic role in this reaction. The sequence is that of tRNA N6-adenosine threonylcarbamoyltransferase from Caulobacter vibrioides (strain ATCC 19089 / CIP 103742 / CB 15) (Caulobacter crescentus).